The sequence spans 76 residues: DNA-directed RNA polymerase subunit omega (76 aa).

Belongs to the RNA polymerase subunit omega family. In cyanobacteria the RNAP catalytic core is composed of 2 alpha, 1 beta, 1 beta', 1 gamma and 1 omega subunit. When a sigma factor is associated with the core the holoenzyme is formed, which can initiate transcription.

The catalysed reaction is RNA(n) + a ribonucleoside 5'-triphosphate = RNA(n+1) + diphosphate. Its function is as follows. Promotes RNA polymerase assembly. Latches the N- and C-terminal regions of the beta' subunit thereby facilitating its interaction with the beta and alpha subunits. The polypeptide is DNA-directed RNA polymerase subunit omega (Synechococcus elongatus (strain ATCC 33912 / PCC 7942 / FACHB-805) (Anacystis nidulans R2)).